Here is a 395-residue protein sequence, read N- to C-terminus: DNA primase small subunit PriS (395 aa).

Catalysis depends on residues aspartate 95, aspartate 97, and aspartate 302.

This sequence belongs to the eukaryotic-type primase small subunit family. In terms of assembly, heterodimer of a small subunit (PriS) and a large subunit (PriL). Requires Mg(2+) as cofactor. It depends on Mn(2+) as a cofactor.

Catalytic subunit of DNA primase, an RNA polymerase that catalyzes the synthesis of short RNA molecules used as primers for DNA polymerase during DNA replication. The small subunit contains the primase catalytic core and has DNA synthesis activity on its own. Binding to the large subunit stabilizes and modulates the activity, increasing the rate of DNA synthesis while decreasing the length of the DNA fragments, and conferring RNA synthesis capability. The DNA polymerase activity may enable DNA primase to also catalyze primer extension after primer synthesis. May also play a role in DNA repair. The sequence is that of DNA primase small subunit PriS from Methanothrix thermoacetophila (strain DSM 6194 / JCM 14653 / NBRC 101360 / PT) (Methanosaeta thermophila).